Here is a 276-residue protein sequence, read N- to C-terminus: Shikimate dehydrogenase (NADP(+)) (276 aa).

Residues 15–17 and T62 each bind shikimate; that span reads SKS. K66 (proton acceptor) is an active-site residue. Residues N87 and D103 each contribute to the shikimate site. NADP(+)-binding positions include 127-131, 151-156, and M215; these read GAGGA and NRTLSK. Y217 serves as a coordination point for shikimate. G239 serves as a coordination point for NADP(+).

Belongs to the shikimate dehydrogenase family. In terms of assembly, homodimer.

The catalysed reaction is shikimate + NADP(+) = 3-dehydroshikimate + NADPH + H(+). The protein operates within metabolic intermediate biosynthesis; chorismate biosynthesis; chorismate from D-erythrose 4-phosphate and phosphoenolpyruvate: step 4/7. Functionally, involved in the biosynthesis of the chorismate, which leads to the biosynthesis of aromatic amino acids. Catalyzes the reversible NADPH linked reduction of 3-dehydroshikimate (DHSA) to yield shikimate (SA). This is Shikimate dehydrogenase (NADP(+)) from Cellvibrio japonicus (strain Ueda107) (Pseudomonas fluorescens subsp. cellulosa).